The chain runs to 274 residues: Large ribosomal subunit protein uL2 (274 aa).

A disordered region spans residues 224 to 259 (AMNPVDHPHGGGEGRTSGGRHPVTPWGIPTKGYKTR).

The protein belongs to the universal ribosomal protein uL2 family. Part of the 50S ribosomal subunit. Forms a bridge to the 30S subunit in the 70S ribosome.

One of the primary rRNA binding proteins. Required for association of the 30S and 50S subunits to form the 70S ribosome, for tRNA binding and peptide bond formation. It has been suggested to have peptidyltransferase activity; this is somewhat controversial. Makes several contacts with the 16S rRNA in the 70S ribosome. The polypeptide is Large ribosomal subunit protein uL2 (Geobacter sp. (strain M21)).